A 60-amino-acid polypeptide reads, in one-letter code: uncharacterized protein (60 aa).

This is an uncharacterized protein from Archaeoglobus fulgidus (strain ATCC 49558 / DSM 4304 / JCM 9628 / NBRC 100126 / VC-16).